The primary structure comprises 195 residues: Der GTPase-activating protein YihI (195 aa).

Positions 1–81 (MSRTKKTRRI…KAVVKEVKDP (81 aa)) are disordered. 3 stretches are compositionally biased toward basic and acidic residues: residues 9–23 (RITDIMPARKTDKPK), 38–49 (TRYELDAQAREE), and 66–81 (DPAEQKKAVVKEVKDP).

The protein belongs to the YihI family. As to quaternary structure, interacts with Der.

In terms of biological role, a GTPase-activating protein (GAP) that modifies Der/EngA GTPase function. May play a role in ribosome biogenesis. The polypeptide is Der GTPase-activating protein YihI (Mannheimia haemolytica (Pasteurella haemolytica)).